Consider the following 122-residue polypeptide: Large ribosomal subunit protein uL14 (122 aa).

This sequence belongs to the universal ribosomal protein uL14 family. As to quaternary structure, part of the 50S ribosomal subunit. Forms a cluster with proteins L3 and L19. In the 70S ribosome, L14 and L19 interact and together make contacts with the 16S rRNA in bridges B5 and B8.

Functionally, binds to 23S rRNA. Forms part of two intersubunit bridges in the 70S ribosome. In Campylobacter lari (strain RM2100 / D67 / ATCC BAA-1060), this protein is Large ribosomal subunit protein uL14.